The following is a 257-amino-acid chain: Imidazole glycerol phosphate synthase subunit HisF (257 aa).

Active-site residues include Asp-12 and Asp-131.

It belongs to the HisA/HisF family. Heterodimer of HisH and HisF.

The protein resides in the cytoplasm. It catalyses the reaction 5-[(5-phospho-1-deoxy-D-ribulos-1-ylimino)methylamino]-1-(5-phospho-beta-D-ribosyl)imidazole-4-carboxamide + L-glutamine = D-erythro-1-(imidazol-4-yl)glycerol 3-phosphate + 5-amino-1-(5-phospho-beta-D-ribosyl)imidazole-4-carboxamide + L-glutamate + H(+). It participates in amino-acid biosynthesis; L-histidine biosynthesis; L-histidine from 5-phospho-alpha-D-ribose 1-diphosphate: step 5/9. Its function is as follows. IGPS catalyzes the conversion of PRFAR and glutamine to IGP, AICAR and glutamate. The HisF subunit catalyzes the cyclization activity that produces IGP and AICAR from PRFAR using the ammonia provided by the HisH subunit. In Burkholderia multivorans (strain ATCC 17616 / 249), this protein is Imidazole glycerol phosphate synthase subunit HisF.